A 57-amino-acid polypeptide reads, in one-letter code: Small ribosomal subunit protein bS21 (57 aa).

This sequence belongs to the bacterial ribosomal protein bS21 family.

In Lysinibacillus sphaericus (strain C3-41), this protein is Small ribosomal subunit protein bS21.